The sequence spans 743 residues: Glycerol dehydrogenase large subunit (743 aa).

The N-terminal stretch at 1–24 (MRRSHLLATVACATLACAPLAANA) is a signal peptide. Positions 27-41 (APAGSGGSPTSSVPG) are enriched in low complexity. 2 disordered regions span residues 27-115 (APAG…GHDD) and 445-474 (ILPV…STGM).

The protein belongs to the bacterial PQQ dehydrogenase family. Pyrroloquinoline quinone is required as a cofactor.

The protein resides in the secreted. The catalysed reaction is glycerol + A = dihydroxyacetone + AH2. In terms of biological role, catalyzes the oxidation of glycerol to glycerone. Also acts, more slowly, on a number of other polyols including D-sorbitol, D-arabinitol, D-mannitol, meso-erythritol, adonitol and propylene glycol. This is Glycerol dehydrogenase large subunit (sldA) from Gluconobacter oxydans (strain 621H) (Gluconobacter suboxydans).